The primary structure comprises 270 residues: Catechol 1,2-dioxygenase (270 aa).

Residues Tyr-152, Tyr-186, His-210, and His-212 each contribute to the Fe cation site.

This sequence belongs to the intradiol ring-cleavage dioxygenase family. The cofactor is Fe(3+).

The catalysed reaction is catechol + O2 = cis,cis-muconate + 2 H(+). In Rhodococcus opacus (Nocardia opaca), this protein is Catechol 1,2-dioxygenase (catA).